The chain runs to 115 residues: Large ribosomal subunit protein bL21 (115 aa).

This sequence belongs to the bacterial ribosomal protein bL21 family. In terms of assembly, part of the 50S ribosomal subunit. Contacts protein L20.

This protein binds to 23S rRNA in the presence of protein L20. This is Large ribosomal subunit protein bL21 from Picosynechococcus sp. (strain ATCC 27264 / PCC 7002 / PR-6) (Agmenellum quadruplicatum).